A 153-amino-acid polypeptide reads, in one-letter code: ORM1-like protein 1 (153 aa).

The Cytoplasmic segment spans residues 1–26 (MNVGVAHSEVNPNTRVMNSRGMWLTY). The next 2 helical transmembrane spans lie at 27-46 (ALGVGLLHIVLLSIPFFSVP) and 47-64 (VAWTLTNVIHNLGMYVFL). Over 65 to 100 (HAVKGTPFETPDQGKARLLTHWEQLDYGVQFTSSRK) the chain is Cytoplasmic. Residues 101–121 (FFTISPIILYFLASFYTKYDT) form a helical membrane-spanning segment. Over 122–123 (TH) the chain is Extracellular. A helical membrane pass occupies residues 124–140 (FILNTASLLSVLIPKMP). Residues 141 to 153 (QLHGVRIFGINKY) are Cytoplasmic-facing.

The protein belongs to the ORM family. As to quaternary structure, ceramide-sensitive subunit of the serine palmitoyltransferase (SPT) complex, which is also composed of SPTLC1, SPTLC2/3 and SPTSSA/B.

It localises to the endoplasmic reticulum membrane. Plays an essential role in the homeostatic regulation of sphingolipid de novo biosynthesis by modulating the activity of the serine palmitoyltransferase (SPT) in response to ceramide levels. When complexed to SPT, the binding of ceramides to its N-terminus stabilizes a conformation that block SPT substrate entry, hence preventing SPT catalytic activity. Through this mechanism, maintains ceramide levels at sufficient concentrations for the production of complex sphingolipids, but which prevents the accumulation of ceramides to levels that trigger apoptosis. This Bos taurus (Bovine) protein is ORM1-like protein 1 (ORMDL1).